A 463-amino-acid polypeptide reads, in one-letter code: T-box transcription factor TBX1 (463 aa).

Disordered regions lie at residues 39 to 58 (SPSP…PCSA) and 75 to 103 (GASS…PVKK). A compositionally biased stretch (low complexity) spans 75–97 (GASSSSCASSTPGSGSTGSSGSS). The segment at residues 119–297 (LWDEFNQLGT…SNPFAKGFRD (179 aa)) is a DNA-binding region (T-box). Disordered regions lie at residues 320–354 (RSRN…PLHG) and 367–405 (SPSL…LHHH). Over residues 323–332 (NPVSSPPQNG) the composition is skewed to polar residues. A compositionally biased stretch (basic and acidic residues) spans 333-347 (SDKDGDGRREYERDT). Positions 367-380 (SPSLPVPGGLVPLS) are enriched in low complexity. The Nuclear localization signal signature appears at 420–431 (KTRPAPYPLPSI).

Binds DNA as a dimer. Interacts with dscr6/ripply3.

The protein localises to the nucleus. Probable transcriptional regulator involved in developmental processes. Binds to the palindromic T site 5'-TTCACACCTAGGTGTGAA-3' DNA sequence. Induces pre-placodal ectoderm (PPE) gene expression in regions where RIPPLY3 is absent. Plays a role in the formation of the anteroposterior (AP) axis during embryonic development; required to establish the posterolateral border of the pre-placodal ectoderm (PPE) acting downstream of the retinoic acid receptor (RAR) signaling. This is T-box transcription factor TBX1 (tbx1) from Xenopus tropicalis (Western clawed frog).